We begin with the raw amino-acid sequence, 449 residues long: Probable glycine dehydrogenase (decarboxylating) subunit 1 (449 aa).

It belongs to the GcvP family. N-terminal subunit subfamily. As to quaternary structure, the glycine cleavage system is composed of four proteins: P, T, L and H. In this organism, the P 'protein' is a heterodimer of two subunits.

It catalyses the reaction N(6)-[(R)-lipoyl]-L-lysyl-[glycine-cleavage complex H protein] + glycine + H(+) = N(6)-[(R)-S(8)-aminomethyldihydrolipoyl]-L-lysyl-[glycine-cleavage complex H protein] + CO2. Its function is as follows. The glycine cleavage system catalyzes the degradation of glycine. The P protein binds the alpha-amino group of glycine through its pyridoxal phosphate cofactor; CO(2) is released and the remaining methylamine moiety is then transferred to the lipoamide cofactor of the H protein. The sequence is that of Probable glycine dehydrogenase (decarboxylating) subunit 1 from Oceanobacillus iheyensis (strain DSM 14371 / CIP 107618 / JCM 11309 / KCTC 3954 / HTE831).